Consider the following 371-residue polypeptide: Bifunctional enzyme IspD/IspF (371 aa).

Positions 1-210 are 2-C-methyl-D-erythritol 4-phosphate cytidylyltransferase; that stretch reads MSEISLIMLA…LDLPKPSFEI (210 aa). The interval 211 to 371 is 2-C-methyl-D-erythritol 2,4-cyclodiphosphate synthase; that stretch reads FTGNGFDVHE…NLKYFDWTRL (161 aa). A divalent metal cation is bound by residues D217 and H219. Residues 217–219 and 243–244 each bind 4-CDP-2-C-methyl-D-erythritol 2-phosphate; these read DVH and HS. Position 251 (H251) interacts with a divalent metal cation. 4-CDP-2-C-methyl-D-erythritol 2-phosphate is bound by residues 265–267, 270–274, 341–344, F348, and R351; these read DIG, YPDTD, and TTTE.

In the N-terminal section; belongs to the IspD/TarI cytidylyltransferase family. IspD subfamily. It in the C-terminal section; belongs to the IspF family. The cofactor is a divalent metal cation.

It catalyses the reaction 2-C-methyl-D-erythritol 4-phosphate + CTP + H(+) = 4-CDP-2-C-methyl-D-erythritol + diphosphate. It carries out the reaction 4-CDP-2-C-methyl-D-erythritol 2-phosphate = 2-C-methyl-D-erythritol 2,4-cyclic diphosphate + CMP. It functions in the pathway isoprenoid biosynthesis; isopentenyl diphosphate biosynthesis via DXP pathway; isopentenyl diphosphate from 1-deoxy-D-xylulose 5-phosphate: step 2/6. It participates in isoprenoid biosynthesis; isopentenyl diphosphate biosynthesis via DXP pathway; isopentenyl diphosphate from 1-deoxy-D-xylulose 5-phosphate: step 4/6. Its function is as follows. Bifunctional enzyme that catalyzes the formation of 4-diphosphocytidyl-2-C-methyl-D-erythritol from CTP and 2-C-methyl-D-erythritol 4-phosphate (MEP) (IspD), and catalyzes the conversion of 4-diphosphocytidyl-2-C-methyl-D-erythritol 2-phosphate (CDP-ME2P) to 2-C-methyl-D-erythritol 2,4-cyclodiphosphate (ME-CPP) with a corresponding release of cytidine 5-monophosphate (CMP) (IspF). The sequence is that of Bifunctional enzyme IspD/IspF from Campylobacter jejuni subsp. doylei (strain ATCC BAA-1458 / RM4099 / 269.97).